Reading from the N-terminus, the 346-residue chain is MFIDKAKIYVKAGDGGNGCVAFLREKYVPFGGPAGGDGGKGGDIILIADSSLQTLMDFKYKRHYKAERGQHGQGGNKKGKDGEDLILKVPIGTVVKDAETGEIIADLVKKGQSVVVAKGGKGGRGNAAFKSPTNQAPMVAEKGELGEERWIELELKLLADVGIIGFPNAGKSTLISILSKARPKIADYPFTTLTPVLGVLQLDVNDYIVLADIPGLIEGASEGLGLGHEFLRHIERTKFLIHLIDVSDFRERDPIDAFNIINKELEKYSPDLIKKPQIVVANKIDALSDKSLLDNLEKYFSERGYPFVAVSLITRENIDKLINLIRETRDKMKKEEVNESVILGNA.

The Obg domain occupies 1–158 (MFIDKAKIYV…RWIELELKLL (158 aa)). Residues 159–330 (ADVGIIGFPN…LINLIRETRD (172 aa)) form the OBG-type G domain. GTP-binding positions include 165-172 (GFPNAGKS), 190-194 (FTTLT), 212-215 (DIPG), 282-285 (NKID), and 311-313 (SLI). Positions 172 and 192 each coordinate Mg(2+).

This sequence belongs to the TRAFAC class OBG-HflX-like GTPase superfamily. OBG GTPase family. As to quaternary structure, monomer. It depends on Mg(2+) as a cofactor.

The protein resides in the cytoplasm. In terms of biological role, an essential GTPase which binds GTP, GDP and possibly (p)ppGpp with moderate affinity, with high nucleotide exchange rates and a fairly low GTP hydrolysis rate. Plays a role in control of the cell cycle, stress response, ribosome biogenesis and in those bacteria that undergo differentiation, in morphogenesis control. The sequence is that of GTPase Obg from Sulfurihydrogenibium sp. (strain YO3AOP1).